A 377-amino-acid polypeptide reads, in one-letter code: Lipoyl synthase, mitochondrial (377 aa).

Positions 98, 103, 109, 128, 132, 135, and 343 each coordinate [4Fe-4S] cluster. Residues 113–332 form the Radical SAM core domain; sequence KKSEATATIM…RDTALDMGFL (220 aa).

It belongs to the radical SAM superfamily. Lipoyl synthase family. Requires [4Fe-4S] cluster as cofactor.

The protein resides in the mitochondrion. The enzyme catalyses [[Fe-S] cluster scaffold protein carrying a second [4Fe-4S](2+) cluster] + N(6)-octanoyl-L-lysyl-[protein] + 2 oxidized [2Fe-2S]-[ferredoxin] + 2 S-adenosyl-L-methionine + 4 H(+) = [[Fe-S] cluster scaffold protein] + N(6)-[(R)-dihydrolipoyl]-L-lysyl-[protein] + 4 Fe(3+) + 2 hydrogen sulfide + 2 5'-deoxyadenosine + 2 L-methionine + 2 reduced [2Fe-2S]-[ferredoxin]. It participates in protein modification; protein lipoylation via endogenous pathway; protein N(6)-(lipoyl)lysine from octanoyl-[acyl-carrier-protein]: step 2/2. Functionally, catalyzes the radical-mediated insertion of two sulfur atoms into the C-6 and C-8 positions of the octanoyl moiety bound to the lipoyl domains of lipoate-dependent enzymes, thereby converting the octanoylated domains into lipoylated derivatives. This Candida tropicalis (strain ATCC MYA-3404 / T1) (Yeast) protein is Lipoyl synthase, mitochondrial.